The sequence spans 222 residues: Superoxide dismutase [Mn], mitochondrial (222 aa).

A mitochondrion-targeting transit peptide spans 1–24 (MLSRGVCGTSRQLAPALGYLGSRQ). Residue His-50 participates in Mn(2+) binding. Tyr-58 is subject to 3'-nitrotyrosine. N6-acetyllysine; alternate occurs at positions 68 and 75. 2 positions are modified to N6-succinyllysine; alternate: Lys-68 and Lys-75. His-98 is a Mn(2+) binding site. The residue at position 114 (Lys-114) is an N6-acetyllysine. 2 positions are modified to N6-acetyllysine; alternate: Lys-122 and Lys-130. An N6-succinyllysine; alternate mark is found at Lys-122 and Lys-130. Mn(2+) is bound by residues Asp-183 and His-187. Lys-202 is modified (N6-acetyllysine).

It belongs to the iron/manganese superoxide dismutase family. As to quaternary structure, homotetramer. Mn(2+) is required as a cofactor. In terms of processing, nitrated under oxidative stress. Nitration coupled with oxidation inhibits the catalytic activity. Post-translationally, acetylation at Lys-122 decreases enzymatic activity. Deacetylated by SIRT3 upon exposure to ionizing radiations or after long fasting. Polyubiquitinated; leading to proteasomal degradation. Deubiquitinated by USP36 which increases protein stability.

Its subcellular location is the mitochondrion matrix. It carries out the reaction 2 superoxide + 2 H(+) = H2O2 + O2. Its function is as follows. Destroys superoxide anion radicals which are normally produced within the cells and which are toxic to biological systems. The polypeptide is Superoxide dismutase [Mn], mitochondrial (SOD2) (Pongo pygmaeus (Bornean orangutan)).